Consider the following 259-residue polypeptide: MDFLHLGSFVFSSRLILGTGKFSNADLMIEAIKASGAQLVTVALRRFNREQIADDLFGPLSALQGITLMPNTSGASTAREAIHAAHIARELSGSPFIKVEIHPNPQHLMPDALETWEASRILAKEGFLVMPYIPADPVLAKRLEEVGCASVMPLGSAIGSGQGLANAGMIELIIRESGIPVIVDAGLRAPSEAAAAMEMGCGAVLVNSAVAVAGNPPEMANAFAEAVRAGRRAFKAELMPKSSFALSTSPLTTFLGKKS.

The active-site Schiff-base intermediate with DXP is the Lys-98. 1-deoxy-D-xylulose 5-phosphate is bound by residues Gly-159, 185 to 186 (AG), and 207 to 208 (NS).

This sequence belongs to the ThiG family. In terms of assembly, homotetramer. Forms heterodimers with either ThiH or ThiS.

The protein resides in the cytoplasm. The catalysed reaction is [ThiS sulfur-carrier protein]-C-terminal-Gly-aminoethanethioate + 2-iminoacetate + 1-deoxy-D-xylulose 5-phosphate = [ThiS sulfur-carrier protein]-C-terminal Gly-Gly + 2-[(2R,5Z)-2-carboxy-4-methylthiazol-5(2H)-ylidene]ethyl phosphate + 2 H2O + H(+). The protein operates within cofactor biosynthesis; thiamine diphosphate biosynthesis. Its function is as follows. Catalyzes the rearrangement of 1-deoxy-D-xylulose 5-phosphate (DXP) to produce the thiazole phosphate moiety of thiamine. Sulfur is provided by the thiocarboxylate moiety of the carrier protein ThiS. In vitro, sulfur can be provided by H(2)S. The sequence is that of Thiazole synthase from Chlorobium phaeobacteroides (strain DSM 266 / SMG 266 / 2430).